The sequence spans 238 residues: MORN repeat-containing protein 3 (238 aa).

7 MORN repeats span residues 38–60, 62–84, 91–113, 114–136, 137–159, 160–182, and 184–205; these read YTGEWLNNLRHGKGTYMWKRRKS, YEGDWKCGERSGFGTYSVQDSNT, YSGYWDNDKKHGYGTHFYSAKEY, YEGEWKCGKRCGWGRMYFANGDI, YEGEWLEDKHSGQGMLCLANENR, YEGSWKDGKKHGPGKFYYLNKGQ, and YEGVWVEDIPKCGTMVDFGRTE.

It localises to the cytoplasmic vesicle. The protein resides in the secretory vesicle. The protein localises to the acrosome. Functionally, assembles a suppression complex (suppresome) by tethering SIRT1 and MDM2 to regulate composite modifications of p53/TP53. Confers both deacetylation-mediated functional inactivation, by SIRT1, and ubiquitination-dependent degradation, by MDM2, of p53/TP53, promoting a proliferative and cell survival behaviors. May play a role in the regulation of spermatogenesis. The chain is MORN repeat-containing protein 3 (morn3) from Xenopus laevis (African clawed frog).